The chain runs to 261 residues: MFELFTALMLGILEGITEFLPVSSTGHLLIAEHWLGSRSDFFNIVIQAGAILAITFVFRKKVWSLATGLDKYSNRDYVMKLATAFLITAVVGLAVRKANWQLPETIQPIAWALIIGGIWILIAESVAKHLPERENVTWSVAIAVGLAQVVAGVFPGTSRSASTIFLAMLLGLSKRSAAAEFSFLVGIPTMFSASSYACFELFKRGELLHENWLEVSVAFVAAMLTGFAVVKWLLGYIKNHSFAPFAYYRIALGLVLLTWLT.

The next 7 membrane-spanning stretches (helical) occupy residues 38–58 (RSDF…TFVF), 75–95 (RDYV…GLAV), 106–126 (IQPI…AESV), 136–156 (VTWS…VFPG), 181–201 (FSFL…CFEL), 217–237 (VAFV…LGYI), and 241–261 (SFAP…TWLT).

It belongs to the UppP family.

Its subcellular location is the cell inner membrane. It carries out the reaction di-trans,octa-cis-undecaprenyl diphosphate + H2O = di-trans,octa-cis-undecaprenyl phosphate + phosphate + H(+). Catalyzes the dephosphorylation of undecaprenyl diphosphate (UPP). Confers resistance to bacitracin. This Xylella fastidiosa (strain Temecula1 / ATCC 700964) protein is Undecaprenyl-diphosphatase.